The primary structure comprises 401 residues: 8-amino-7-oxononanoate synthase (401 aa).

Arg19 lines the substrate pocket. Position 106 to 107 (106 to 107 (GY)) interacts with pyridoxal 5'-phosphate. Residue His131 participates in substrate binding. Pyridoxal 5'-phosphate-binding residues include Ser176, His204, and Thr233. At Lys236 the chain carries N6-(pyridoxal phosphate)lysine. Substrate is bound at residue Thr350.

The protein belongs to the class-II pyridoxal-phosphate-dependent aminotransferase family. BioF subfamily. As to quaternary structure, homodimer. It depends on pyridoxal 5'-phosphate as a cofactor.

It carries out the reaction 6-carboxyhexanoyl-[ACP] + L-alanine + H(+) = (8S)-8-amino-7-oxononanoate + holo-[ACP] + CO2. It functions in the pathway cofactor biosynthesis; biotin biosynthesis. Its function is as follows. Catalyzes the decarboxylative condensation of pimeloyl-[acyl-carrier protein] and L-alanine to produce 8-amino-7-oxononanoate (AON), [acyl-carrier protein], and carbon dioxide. In Pseudomonas aeruginosa (strain ATCC 15692 / DSM 22644 / CIP 104116 / JCM 14847 / LMG 12228 / 1C / PRS 101 / PAO1), this protein is 8-amino-7-oxononanoate synthase.